The sequence spans 78 residues: Large ribosomal subunit protein uL29 (78 aa).

It belongs to the universal ribosomal protein uL29 family.

The chain is Large ribosomal subunit protein uL29 from Rhodococcus erythropolis (strain PR4 / NBRC 100887).